The following is a 294-amino-acid chain: uncharacterized protein (294 aa).

Residues 1–16 form the signal peptide; the sequence is MQNFMVLLLLIVAVVA. N25 and N162 each carry an N-linked (GlcNAc...) asparagine; by host glycan.

This is an uncharacterized protein from Acheta domesticus (House cricket).